Reading from the N-terminus, the 465-residue chain is MNQDTICAIATAQGGAIGSIRVSGPEAITITGRIFTPAKSGKLLSEQKPYTLTFGRIYNGEEMIDEVLVSLFRAPHSYTGEDSTEITCHGSSYILQQVMQLLIKNGCRMAQPGEYTQRAFLNGKMDLSQAEAVADLIASSSAATHRLALSQMRGGFSKELTTLREKLLNFTSMIELELDFSEEDVEFADRSALRRLADEIEEVIARLANSFSVGNVIKNGVPVAIIGETNAGKSTLLNVLLNEDKAIVSDIHGTTRDVIEDTVNIGGITFRFIDTAGIRETSDTIESLGIERTFQKLDQAEIVLWMIDSADAISQLTLLSDKILPRCEHKQLILVFNKVELINETQKNELASQFSEHIGSEIESIFISAKQRLHTDELQQRLVAAAHLPTVTQNDVIVTNIRHYEALTRALDAIHRVQEGLDANISGDFLSQDIRECIFHLSDIAGEVTNDMVLQNIFAHFCIGK.

(6S)-5-formyl-5,6,7,8-tetrahydrofolate contacts are provided by Arg21, Glu85, and Lys124. The 168-residue stretch at 220–387 (GVPVAIIGET…LQQRLVAAAH (168 aa)) folds into the TrmE-type G domain. Asn230 is a binding site for K(+). Residues 230–235 (NAGKST), 249–255 (SDIHGTT), and 274–277 (DTAG) each bind GTP. Ser234 is a Mg(2+) binding site. 3 residues coordinate K(+): Ser249, Ile251, and Thr254. Residue Thr255 participates in Mg(2+) binding. A (6S)-5-formyl-5,6,7,8-tetrahydrofolate-binding site is contributed by Lys465.

The protein belongs to the TRAFAC class TrmE-Era-EngA-EngB-Septin-like GTPase superfamily. TrmE GTPase family. In terms of assembly, homodimer. Heterotetramer of two MnmE and two MnmG subunits. Requires K(+) as cofactor.

It localises to the cytoplasm. Functionally, exhibits a very high intrinsic GTPase hydrolysis rate. Involved in the addition of a carboxymethylaminomethyl (cmnm) group at the wobble position (U34) of certain tRNAs, forming tRNA-cmnm(5)s(2)U34. This Bacteroides fragilis (strain YCH46) protein is tRNA modification GTPase MnmE.